Reading from the N-terminus, the 371-residue chain is 4-hydroxy-3-methylbut-2-en-1-yl diphosphate synthase (flavodoxin) (371 aa).

Cys272, Cys275, Cys307, and Glu314 together coordinate [4Fe-4S] cluster.

This sequence belongs to the IspG family. The cofactor is [4Fe-4S] cluster.

It catalyses the reaction (2E)-4-hydroxy-3-methylbut-2-enyl diphosphate + oxidized [flavodoxin] + H2O + 2 H(+) = 2-C-methyl-D-erythritol 2,4-cyclic diphosphate + reduced [flavodoxin]. Its pathway is isoprenoid biosynthesis; isopentenyl diphosphate biosynthesis via DXP pathway; isopentenyl diphosphate from 1-deoxy-D-xylulose 5-phosphate: step 5/6. In terms of biological role, converts 2C-methyl-D-erythritol 2,4-cyclodiphosphate (ME-2,4cPP) into 1-hydroxy-2-methyl-2-(E)-butenyl 4-diphosphate. The protein is 4-hydroxy-3-methylbut-2-en-1-yl diphosphate synthase (flavodoxin) of Magnetococcus marinus (strain ATCC BAA-1437 / JCM 17883 / MC-1).